The primary structure comprises 208 residues: uncharacterized protein (208 aa).

The next 6 helical transmembrane spans lie at 5-25, 41-61, 69-89, 123-143, 150-170, and 176-196; these read VIGILVIIAIISVGFFQKEAW, MLLIAADVFFPIVPFALIAAL, ANGIWITLTGSMLGTILLFFL, VLLGRLIPVIPSLVMNVICGL, VFFFASLIGKIPNIVVVTIAG, and NKLLSISIYGTYILIIMLVIY.

Its subcellular location is the cell membrane. This is an uncharacterized protein from Bacillus subtilis (strain 168).